Reading from the N-terminus, the 245-residue chain is P2Y purinoceptor 13 (245 aa).

Over 1-9 (QLRAFVCRL) the chain is Extracellular. A disulfide bridge connects residues Cys7 and Cys85. A helical transmembrane segment spans residues 10 to 30 (SSVIFYETMYVGIVLLGLIAF). Over 31–35 (DRFLK) the chain is Cytoplasmic. A helical transmembrane segment spans residues 36–56 (IIRPLRNIFLKKTVFAKTVSV). Over 57–85 (FIWSFFFFISLPNMILSNKEATPSSVKKC) the chain is Extracellular. The chain crosses the membrane as a helical span at residues 86–106 (ASLKGPLGLKWHQIVNNISQF). The Cytoplasmic segment spans residues 107–126 (IFWTVFVLMLVFYVVIAKKV). The chain crosses the membrane as a helical span at residues 127–147 (YDSYRKSKSKDRKNNKKLEGK). Residues 148 to 174 (VFVVVAVFFVCFAPFHFTRVPYTYSQT) lie on the Extracellular side of the membrane. Residues 175–195 (NNKTDCRLQNQLFIAKETTLF) form a helical membrane-spanning segment. Residues 196–245 (LAATNICMDPLIYIFLCKKFTEKLPCMRGRKTIASSQENQSSQTDNITLG) lie on the Cytoplasmic side of the membrane.

It belongs to the G-protein coupled receptor 1 family.

The protein resides in the cell membrane. Its function is as follows. Receptor for ADP. Coupled to G(i)-proteins. May play a role in hematopoiesis and the immune system. The sequence is that of P2Y purinoceptor 13 (P2RY13) from Macaca fascicularis (Crab-eating macaque).